The primary structure comprises 560 residues: uncharacterized protein (560 aa).

Residues 18 to 44 constitute a DNA-binding region (zn(2)-C6 fungal-type); that stretch reads CLRCRRRKVKCDRQYPCSRCKESEESC. Residues 60-80 are disordered; it reads LSRPITRETDSSAHQETRTRL. Basic and acidic residues predominate over residues 64–80; that stretch reads ITRETDSSAHQETRTRL. Residues 182 to 202 form a helical membrane-spanning segment; the sequence is FATSIILIVTAIAVALSLESF.

It is found in the nucleus membrane. This is an uncharacterized protein from Schizosaccharomyces pombe (strain 972 / ATCC 24843) (Fission yeast).